The primary structure comprises 69 residues: uncharacterized protein (69 aa).

The tract at residues 48-69 is disordered; that stretch reads EADDVKPRKGRKPKAVSDADKD.

This is an uncharacterized protein from Salmonella phage P22 (Bacteriophage P22).